We begin with the raw amino-acid sequence, 169 residues long: Myosin regulatory light chain 11 (169 aa).

Alanine 2 carries the n,N,N-trimethylalanine modification. A phosphoserine mark is found at serine 15 and serine 16. Threonine 25 and threonine 35 each carry phosphothreonine. An EF-hand 1 domain is found at 25 to 60 (TQIQEFKEAFTVIDQNRDGIIDKEDLRDTFAAMGRL). Residues aspartate 38, asparagine 40, aspartate 42, and aspartate 49 each coordinate Ca(2+). The residue at position 75 (serine 75) is a Phosphoserine. EF-hand domains follow at residues 95–130 (DPED…QCDR) and 131–166 (FSQE…GDAK). Threonine 101 bears the Phosphothreonine mark.

As to quaternary structure, myosin is a hexamer of 2 heavy chains and 4 light chains.

Myosin regulatory subunit that plays an essential role to maintain muscle integrity during early development. Plays a role in regulation of muscle contraction. In Mus musculus (Mouse), this protein is Myosin regulatory light chain 11 (Myl11).